A 306-amino-acid polypeptide reads, in one-letter code: Pantothenate kinase (306 aa).

An ATP-binding site is contributed by 91–98; the sequence is GSVAVGKS.

It belongs to the prokaryotic pantothenate kinase family.

The protein localises to the cytoplasm. The catalysed reaction is (R)-pantothenate + ATP = (R)-4'-phosphopantothenate + ADP + H(+). Its pathway is cofactor biosynthesis; coenzyme A biosynthesis; CoA from (R)-pantothenate: step 1/5. This Streptococcus pyogenes serotype M5 (strain Manfredo) protein is Pantothenate kinase.